The primary structure comprises 399 residues: Trimethyllysine dioxygenase (399 aa).

Positions 214, 216, and 360 each coordinate Fe cation.

This sequence belongs to the gamma-BBH/TMLD family. Fe(2+) serves as cofactor. L-ascorbate is required as a cofactor.

The protein resides in the cytoplasm. The catalysed reaction is N(6),N(6),N(6)-trimethyl-L-lysine + 2-oxoglutarate + O2 = (3S)-3-hydroxy-N(6),N(6),N(6)-trimethyl-L-lysine + succinate + CO2. The protein operates within amine and polyamine biosynthesis; carnitine biosynthesis. Its function is as follows. Converts trimethyllysine (TML) into hydroxytrimethyllysine (HTML). In Meyerozyma guilliermondii (strain ATCC 6260 / CBS 566 / DSM 6381 / JCM 1539 / NBRC 10279 / NRRL Y-324) (Yeast), this protein is Trimethyllysine dioxygenase.